A 735-amino-acid chain; its full sequence is 1,4-alpha-glucan branching enzyme GlgB 1 (735 aa).

Aspartate 418 acts as the Nucleophile in catalysis. Glutamate 471 functions as the Proton donor in the catalytic mechanism.

Belongs to the glycosyl hydrolase 13 family. GlgB subfamily. Monomer.

The enzyme catalyses Transfers a segment of a (1-&gt;4)-alpha-D-glucan chain to a primary hydroxy group in a similar glucan chain.. It participates in glycan biosynthesis; glycogen biosynthesis. Catalyzes the formation of the alpha-1,6-glucosidic linkages in glycogen by scission of a 1,4-alpha-linked oligosaccharide from growing alpha-1,4-glucan chains and the subsequent attachment of the oligosaccharide to the alpha-1,6 position. The protein is 1,4-alpha-glucan branching enzyme GlgB 1 of Rhizobium etli (strain ATCC 51251 / DSM 11541 / JCM 21823 / NBRC 15573 / CFN 42).